Consider the following 606-residue polypeptide: Elongation factor 4 (606 aa).

Residues 10–192 (KNIRNFSIIA…ALVARVPPPQ (183 aa)) enclose the tr-type G domain. GTP is bound by residues 22-27 (DHGKST) and 139-142 (NKID).

Belongs to the TRAFAC class translation factor GTPase superfamily. Classic translation factor GTPase family. LepA subfamily.

It is found in the cell inner membrane. It carries out the reaction GTP + H2O = GDP + phosphate + H(+). Functionally, required for accurate and efficient protein synthesis under certain stress conditions. May act as a fidelity factor of the translation reaction, by catalyzing a one-codon backward translocation of tRNAs on improperly translocated ribosomes. Back-translocation proceeds from a post-translocation (POST) complex to a pre-translocation (PRE) complex, thus giving elongation factor G a second chance to translocate the tRNAs correctly. Binds to ribosomes in a GTP-dependent manner. The chain is Elongation factor 4 from Nitrosococcus oceani (strain ATCC 19707 / BCRC 17464 / JCM 30415 / NCIMB 11848 / C-107).